Reading from the N-terminus, the 242-residue chain is Large ribosomal subunit protein uL1 (242 aa).

It belongs to the universal ribosomal protein uL1 family. In terms of assembly, part of the 50S ribosomal subunit.

Functionally, binds directly to 23S rRNA. The L1 stalk is quite mobile in the ribosome, and is involved in E site tRNA release. Its function is as follows. Protein L1 is also a translational repressor protein, it controls the translation of the L11 operon by binding to its mRNA. The polypeptide is Large ribosomal subunit protein uL1 (Streptomyces sp. (strain FRI-5)).